The chain runs to 141 residues: Hemoglobin subunit alpha-D/D' (141 aa).

Residues 1 to 141 (MLTADDKKLI…VAAVLAEKYR (141 aa)) form the Globin domain. Heme b is bound by residues His58 and His87.

This sequence belongs to the globin family. As to quaternary structure, heterotetramer of two alpha-D chains and two beta chains. Red blood cells.

Functionally, involved in oxygen transport from the lung to the various peripheral tissues. The polypeptide is Hemoglobin subunit alpha-D/D' (HBAD) (Gyps rueppelli (Rueppell's griffon)).